The following is a 557-amino-acid chain: Alpha-glucosidase (557 aa).

Residue aspartate 201 is the Nucleophile of the active site. Glutamate 256 acts as the Proton donor in catalysis.

It belongs to the glycosyl hydrolase 13 family.

It catalyses the reaction Hydrolysis of terminal, non-reducing (1-&gt;4)-linked alpha-D-glucose residues with release of alpha-D-glucose.. The sequence is that of Alpha-glucosidase (agl) from Pediococcus pentosaceus.